We begin with the raw amino-acid sequence, 325 residues long: Phospho-N-acetylmuramoyl-pentapeptide-transferase (325 aa).

9 helical membrane-spanning segments follow: residues 7–27, 57–77, 81–101, 122–142, 146–166, 186–206, 227–247, 252–272, and 302–322; these read LFVLILSFAAAVIMSPLFIPF, IVIVLSIFISALAIGIAITGF, LLLLMVVTLGYGIVGFVDDYL, VIAAIFYIGLLAIGFDTFIAI, TFGFDLGWLYLILIVLMLLGA, IAFGAFAILAWSGGFIDTALF, VFMGDTGSLALGGAIAAIAIL, LMLIIVGGVFVIETLSVIIQV, and VVVTFWLVGMIFAIMGVYIGV.

It belongs to the glycosyltransferase 4 family. MraY subfamily. The cofactor is Mg(2+).

It is found in the cell membrane. The catalysed reaction is UDP-N-acetyl-alpha-D-muramoyl-L-alanyl-gamma-D-glutamyl-meso-2,6-diaminopimeloyl-D-alanyl-D-alanine + di-trans,octa-cis-undecaprenyl phosphate = di-trans,octa-cis-undecaprenyl diphospho-N-acetyl-alpha-D-muramoyl-L-alanyl-D-glutamyl-meso-2,6-diaminopimeloyl-D-alanyl-D-alanine + UMP. Its pathway is cell wall biogenesis; peptidoglycan biosynthesis. Catalyzes the initial step of the lipid cycle reactions in the biosynthesis of the cell wall peptidoglycan: transfers peptidoglycan precursor phospho-MurNAc-pentapeptide from UDP-MurNAc-pentapeptide onto the lipid carrier undecaprenyl phosphate, yielding undecaprenyl-pyrophosphoryl-MurNAc-pentapeptide, known as lipid I. The protein is Phospho-N-acetylmuramoyl-pentapeptide-transferase of Shouchella clausii (strain KSM-K16) (Alkalihalobacillus clausii).